A 99-amino-acid polypeptide reads, in one-letter code: Large ribosomal subunit protein uL23 (99 aa).

The protein belongs to the universal ribosomal protein uL23 family. As to quaternary structure, part of the 50S ribosomal subunit. Contacts protein L29, and trigger factor when it is bound to the ribosome.

Functionally, one of the early assembly proteins it binds 23S rRNA. One of the proteins that surrounds the polypeptide exit tunnel on the outside of the ribosome. Forms the main docking site for trigger factor binding to the ribosome. This Rhodopseudomonas palustris (strain BisB5) protein is Large ribosomal subunit protein uL23.